Reading from the N-terminus, the 79-residue chain is Cytochrome b (79 aa).

The next 3 helical transmembrane spans lie at threonine 1–methionine 7, tryptophan 31–isoleucine 52, and tryptophan 67–methionine 79. Heme b-binding residues include histidine 37 and histidine 51.

This sequence belongs to the cytochrome b family. In terms of assembly, the cytochrome bc1 complex contains 3 respiratory subunits (MT-CYB, CYC1 and UQCRFS1), 2 core proteins (UQCRC1 and UQCRC2) and probably 6 low-molecular weight proteins. Requires heme b as cofactor.

The protein resides in the mitochondrion inner membrane. Functionally, component of the ubiquinol-cytochrome c reductase complex (complex III or cytochrome b-c1 complex) that is part of the mitochondrial respiratory chain. The b-c1 complex mediates electron transfer from ubiquinol to cytochrome c. Contributes to the generation of a proton gradient across the mitochondrial membrane that is then used for ATP synthesis. This chain is Cytochrome b (mt-cyb), found in Hypsophrys nicaraguensis (Moga).